Here is a 161-residue protein sequence, read N- to C-terminus: Large ribosomal subunit protein uL15 (161 aa).

The span at Met-1–Pro-10 shows a compositional bias: basic and acidic residues. The segment at Met-1–Glu-42 is disordered. Over residues Arg-21–Val-35 the composition is skewed to gly residues.

The protein belongs to the universal ribosomal protein uL15 family. Part of the 50S ribosomal subunit.

In terms of biological role, binds to the 23S rRNA. In Acidiphilium cryptum (strain JF-5), this protein is Large ribosomal subunit protein uL15.